A 325-amino-acid chain; its full sequence is Forkhead box protein B1 (325 aa).

Positions 12-103 (QKPPYSYISL…GDMFENGSFL (92 aa)) form a DNA-binding region, fork-head. Positions 284-309 (LSNSPPSLSPTSSQTATSQSSPATPS) are enriched in low complexity. Residues 284 to 325 (LSNSPPSLSPTSSQTATSQSSPATPSETLTSPASALHSVAVH) form a disordered region.

The protein resides in the nucleus. In terms of biological role, transcription factor expressed by neural progenitor cells in specific regions of the embryonic neuroepithelium. Essential for the mammillary nuclei maintenance. Negatively regulates the proliferation of oligodendrocyte progenitors and promotes oligodendrocyte maturation. Also expressed in mammary glands, plays a role in lactation, controls development of mammary glands and the inferior colliculi of the midbrain in the central nervous system that regulates the milk-ejection reflex. The polypeptide is Forkhead box protein B1 (FOXB1) (Homo sapiens (Human)).